A 189-amino-acid chain; its full sequence is UPF0398 protein lp_1753 (189 aa).

The protein belongs to the UPF0398 family.

The protein is UPF0398 protein lp_1753 of Lactiplantibacillus plantarum (strain ATCC BAA-793 / NCIMB 8826 / WCFS1) (Lactobacillus plantarum).